Here is a 467-residue protein sequence, read N- to C-terminus: Septin-10 (467 aa).

Residues 63–329 (QGFCFNILCV…ELYRRCKLEE (267 aa)) enclose the Septin-type G domain. The tract at residues 73 to 80 (GETGIGKS) is G1 motif. Residues 73-80 (GETGIGKS), Gly128, 209-217 (KADTVSKTE), Gly263, and Arg278 each bind GTP. The segment at 125–128 (NTVG) is G3 motif. The segment at 208-211 (AKAD) is G4 motif.

Belongs to the TRAFAC class TrmE-Era-EngA-EngB-Septin-like GTPase superfamily. Septin GTPase family. In terms of assembly, septins polymerize into heterooligomeric protein complexes that form filaments, and can associate with cellular membranes, actin filaments and microtubules. GTPase activity is required for filament formation. Interacts with ADGB. Proteolytically cleaved in vitro in a calmodulin-dependent manner.

The protein localises to the cytoplasm. It localises to the cytoskeleton. Its subcellular location is the cell projection. It is found in the cilium. The protein resides in the flagellum. In terms of biological role, filament-forming cytoskeletal GTPase. May play a role in cytokinesis (Potential). This is Septin-10 from Pongo abelii (Sumatran orangutan).